Consider the following 448-residue polypeptide: Chaperone SurA (448 aa).

Residues methionine 1–alanine 27 form the signal peptide. 2 PpiC domains span residues glutamine 185–aspartate 288 and isoleucine 301–glycine 399. Residues leucine 230 to lysine 249 are disordered.

The protein resides in the periplasm. It catalyses the reaction [protein]-peptidylproline (omega=180) = [protein]-peptidylproline (omega=0). Its function is as follows. Chaperone involved in the correct folding and assembly of outer membrane proteins. Recognizes specific patterns of aromatic residues and the orientation of their side chains, which are found more frequently in integral outer membrane proteins. May act in both early periplasmic and late outer membrane-associated steps of protein maturation. This Burkholderia thailandensis (strain ATCC 700388 / DSM 13276 / CCUG 48851 / CIP 106301 / E264) protein is Chaperone SurA.